A 351-amino-acid chain; its full sequence is Transmembrane protein 184 homolog DDB_G0279555 (351 aa).

The helical transmembrane segment at 1–21 threads the bilayer; it reads MWIVAGVCSGVAILLSFYLIY. A glycan (N-linked (GlcNAc...) asparagine) is linked at Asn26. The next 5 membrane-spanning stretches (helical) occupy residues 39–59, 73–93, 127–147, 162–182, and 206–226; these read ILIMVPIYSVDSWLSLRFVEL, YVLYCFFSLIVAYIERDFDLV, FVLQFVFIKPIVAIISLVLET, YVWLTVVENISVGLSLYFLVL, and ILFFSFWQSIAISFLVYFGVI. A glycan (N-linked (GlcNAc...) asparagine) is linked at Asn236. Residues 241 to 261 traverse the membrane as a helical segment; it reads LQDFITCVEMVILAICHHFFF. Asn301 and Asn304 each carry an N-linked (GlcNAc...) asparagine glycan. A disordered region spans residues 327 to 351; the sequence is HNHPTTKKKDEESNLLEPEDKDIII. Positions 339-351 are enriched in acidic residues; sequence SNLLEPEDKDIII.

The protein belongs to the TMEM184 family.

The protein resides in the cell membrane. Its function is as follows. Probable transporter. In Dictyostelium discoideum (Social amoeba), this protein is Transmembrane protein 184 homolog DDB_G0279555 (tmem184C).